A 171-amino-acid chain; its full sequence is UPF0312 protein SAV2687 (171 aa).

It belongs to the UPF0312 family.

This chain is UPF0312 protein SAV2687, found in Staphylococcus aureus (strain Mu50 / ATCC 700699).